The following is a 242-amino-acid chain: Phosphoribosylaminoimidazole-succinocarboxamide synthase (242 aa).

This sequence belongs to the SAICAR synthetase family.

The enzyme catalyses 5-amino-1-(5-phospho-D-ribosyl)imidazole-4-carboxylate + L-aspartate + ATP = (2S)-2-[5-amino-1-(5-phospho-beta-D-ribosyl)imidazole-4-carboxamido]succinate + ADP + phosphate + 2 H(+). It participates in purine metabolism; IMP biosynthesis via de novo pathway; 5-amino-1-(5-phospho-D-ribosyl)imidazole-4-carboxamide from 5-amino-1-(5-phospho-D-ribosyl)imidazole-4-carboxylate: step 1/2. This chain is Phosphoribosylaminoimidazole-succinocarboxamide synthase, found in Cyanothece sp. (strain PCC 7425 / ATCC 29141).